The sequence spans 93 residues: Large ribosomal subunit protein uL23 (93 aa).

It belongs to the universal ribosomal protein uL23 family. In terms of assembly, part of the 50S ribosomal subunit. Contacts protein L29, and trigger factor when it is bound to the ribosome.

In terms of biological role, one of the early assembly proteins it binds 23S rRNA. One of the proteins that surrounds the polypeptide exit tunnel on the outside of the ribosome. Forms the main docking site for trigger factor binding to the ribosome. The sequence is that of Large ribosomal subunit protein uL23 from Helicobacter acinonychis (strain Sheeba).